The chain runs to 61 residues: U-stichotoxin-Hcr1a (61 aa).

The N-terminal stretch at 1–21 is a signal peptide; that stretch reads MKPAIFLMLFVAMFLISEGEG. Residues 22-31 constitute a propeptide that is removed on maturation; sequence FKPKDAPQER. At proline 36 the chain carries Hydroxyproline. 2 cysteine pairs are disulfide-bonded: cysteine 41–cysteine 53 and cysteine 44–cysteine 59.

It belongs to the Hau1a/HC18/HC19 family.

Its subcellular location is the secreted. It is found in the nematocyst. Toxin that is lethal to crab. Does not produce the typical symptoms associated with sodium channel toxins in crabs, suggesting that it likely does not act on sodium channels. The chain is U-stichotoxin-Hcr1a from Radianthus crispa (Leathery sea anemone).